Here is a 137-residue protein sequence, read N- to C-terminus: MWKKKKVKAGVLLYAVTIAAIFSLLLQFYLNRQVAHYQDYALNKEKLVAFAMAKRTKDKVEQESGEQFFNLGQVSYQNKKTGLVTRVRTDKSQYEFLFPSVKIKEEKRDKKEEVATDSSEKVEKKKSEEKPEKKENS.

The helical transmembrane segment at 10-30 threads the bilayer; that stretch reads GVLLYAVTIAAIFSLLLQFYL. A disordered region spans residues 106-137; sequence EKRDKKEEVATDSSEKVEKKKSEEKPEKKENS.

As to quaternary structure, the transformation pili are flexible filaments, consisting mainly of the major pilin ComGC and smaller amounts of the minor pilins, including at least ComGD, ComGF and ComGG, and perhaps ComGE. Interacts with ComGC; the interaction is probably direct. Interacts with ComGD. Interacts with ComGE. Interacts with ComGF. May act as a link between ComGC, ComGD and ComGF.

The protein resides in the fimbrium. It is found in the cell membrane. Required for formation of the type IV-like pilus (T4P) that plays a role in transformation. Transformation pili are dynamically extended and retracted, perhaps thereby promoting DNA uptake and transformation. Required for transformation. In Streptococcus pneumoniae (strain ATCC BAA-255 / R6), this protein is Competence protein ComGG.